The following is a 295-amino-acid chain: MQGVLLALVPMFAWGSIGFVANKFGGDAKQQTLGMTLGAFVFALIVFLFRMPTLTWQIFLIGFIGGLLWAIGQFGQFNSMKYMGVSVASPLSSGSQLVIGGLIGVFAFHEWTKQIQFILGFIAMAVLVVGFYFSAKRDPENAVVEEGRNYTKGLTALTYSTLGYVIYVILFNNLAVLWFNVHFDTLTIILPMSVGMIFGALVMGRFKIKMEKYVYQNMIVGAMWGVGNIFMLMAASAAGNAIAFSFSQLGVIVSTIGGILFLGEKKTKKELVYVGIGIVLFVTGAILLAIVKSKG.

10 helical membrane-spanning segments follow: residues 4-26, 33-50, 54-72, 85-107, 117-135, 156-178, 188-206, 213-235, 241-263, and 270-291; these read VLLA…KFGG, LGMT…FLFR, LTWQ…WAIG, VSVA…GVFA, FILG…YFSA, ALTY…AVLW, IILP…MGRF, YVYQ…LMAA, AIAF…LFLG, and ELVY…LAIV.

Belongs to the GRP transporter (TC 2.A.7.5) family.

The protein resides in the cell membrane. This chain is Putative sugar uptake protein YxfA (yxfA), found in Lactococcus lactis subsp. lactis (strain IL1403) (Streptococcus lactis).